The sequence spans 301 residues: HTH-type transcriptional regulator AbaB (301 aa).

Residues methionine 1–threonine 58 form the HTH lysR-type domain. The segment at residues phenylalanine 18 to arginine 37 is a DNA-binding region (H-T-H motif).

The protein belongs to the LysR transcriptional regulatory family.

Putative regulator that may be involved in stimulating antibiotic production in S.antibioticus. This is HTH-type transcriptional regulator AbaB from Streptomyces antibioticus.